The sequence spans 92 residues: Small ribosomal subunit protein uS19 (92 aa).

The protein belongs to the universal ribosomal protein uS19 family.

Its function is as follows. Protein S19 forms a complex with S13 that binds strongly to the 16S ribosomal RNA. The protein is Small ribosomal subunit protein uS19 of Staphylococcus epidermidis (strain ATCC 35984 / DSM 28319 / BCRC 17069 / CCUG 31568 / BM 3577 / RP62A).